The chain runs to 300 residues: tRNA dimethylallyltransferase (300 aa).

11-18 (GPTAVGKS) serves as a coordination point for ATP. 13–18 (TAVGKS) lines the substrate pocket. The interaction with substrate tRNA stretch occupies residues 35-38 (DSIQ).

It belongs to the IPP transferase family. As to quaternary structure, monomer. Requires Mg(2+) as cofactor.

The catalysed reaction is adenosine(37) in tRNA + dimethylallyl diphosphate = N(6)-dimethylallyladenosine(37) in tRNA + diphosphate. Its function is as follows. Catalyzes the transfer of a dimethylallyl group onto the adenine at position 37 in tRNAs that read codons beginning with uridine, leading to the formation of N6-(dimethylallyl)adenosine (i(6)A). The polypeptide is tRNA dimethylallyltransferase (Borrelia duttonii (strain Ly)).